A 127-amino-acid polypeptide reads, in one-letter code: Putative pre-16S rRNA nuclease (127 aa).

It belongs to the YqgF nuclease family.

Its subcellular location is the cytoplasm. In terms of biological role, could be a nuclease involved in processing of the 5'-end of pre-16S rRNA. The polypeptide is Putative pre-16S rRNA nuclease (Campylobacter jejuni subsp. jejuni serotype O:6 (strain 81116 / NCTC 11828)).